Here is a 313-residue protein sequence, read N- to C-terminus: Desiccation-related protein PCC13-62 (313 aa).

The first 26 residues, 1 to 26 (MAQQPTFASAALVSFFLALICSCSYA), serve as a signal peptide directing secretion.

The protein is Desiccation-related protein PCC13-62 of Craterostigma plantagineum (Blue gem).